The following is a 416-amino-acid chain: D-amino acid dehydrogenase (416 aa).

Position 3 to 17 (3 to 17 (ITILGSGVIGVTTAY)) interacts with FAD.

Belongs to the DadA oxidoreductase family. Requires FAD as cofactor.

The enzyme catalyses a D-alpha-amino acid + A + H2O = a 2-oxocarboxylate + AH2 + NH4(+). It functions in the pathway amino-acid degradation; D-alanine degradation; NH(3) and pyruvate from D-alanine: step 1/1. Functionally, oxidative deamination of D-amino acids. The chain is D-amino acid dehydrogenase from Brucella canis (strain ATCC 23365 / NCTC 10854 / RM-666).